The following is a 355-amino-acid chain: UDP-N-acetylglucosamine--N-acetylmuramyl-(pentapeptide) pyrophosphoryl-undecaprenol N-acetylglucosamine transferase (355 aa).

Residues 15–17 (TGG), asparagine 127, arginine 163, serine 191, isoleucine 244, 263–268 (ALTVSE), and glutamine 288 each bind UDP-N-acetyl-alpha-D-glucosamine.

The protein belongs to the glycosyltransferase 28 family. MurG subfamily.

The protein localises to the cell inner membrane. It catalyses the reaction di-trans,octa-cis-undecaprenyl diphospho-N-acetyl-alpha-D-muramoyl-L-alanyl-D-glutamyl-meso-2,6-diaminopimeloyl-D-alanyl-D-alanine + UDP-N-acetyl-alpha-D-glucosamine = di-trans,octa-cis-undecaprenyl diphospho-[N-acetyl-alpha-D-glucosaminyl-(1-&gt;4)]-N-acetyl-alpha-D-muramoyl-L-alanyl-D-glutamyl-meso-2,6-diaminopimeloyl-D-alanyl-D-alanine + UDP + H(+). It functions in the pathway cell wall biogenesis; peptidoglycan biosynthesis. Its function is as follows. Cell wall formation. Catalyzes the transfer of a GlcNAc subunit on undecaprenyl-pyrophosphoryl-MurNAc-pentapeptide (lipid intermediate I) to form undecaprenyl-pyrophosphoryl-MurNAc-(pentapeptide)GlcNAc (lipid intermediate II). The chain is UDP-N-acetylglucosamine--N-acetylmuramyl-(pentapeptide) pyrophosphoryl-undecaprenol N-acetylglucosamine transferase from Escherichia coli O157:H7.